Here is a 466-residue protein sequence, read N- to C-terminus: Exodeoxyribonuclease 7 large subunit (466 aa).

Belongs to the XseA family. In terms of assembly, heterooligomer composed of large and small subunits.

Its subcellular location is the cytoplasm. The enzyme catalyses Exonucleolytic cleavage in either 5'- to 3'- or 3'- to 5'-direction to yield nucleoside 5'-phosphates.. In terms of biological role, bidirectionally degrades single-stranded DNA into large acid-insoluble oligonucleotides, which are then degraded further into small acid-soluble oligonucleotides. This chain is Exodeoxyribonuclease 7 large subunit, found in Ruthia magnifica subsp. Calyptogena magnifica.